Reading from the N-terminus, the 553-residue chain is Dihydroxy-acid dehydratase (553 aa).

Residue Asp-78 participates in Mg(2+) binding. Position 119 (Cys-119) interacts with [2Fe-2S] cluster. 2 residues coordinate Mg(2+): Asp-120 and Lys-121. An N6-carboxylysine modification is found at Lys-121. [2Fe-2S] cluster is bound at residue Cys-192. Glu-442 lines the Mg(2+) pocket. Ser-468 functions as the Proton acceptor in the catalytic mechanism.

The protein belongs to the IlvD/Edd family. As to quaternary structure, homodimer. [2Fe-2S] cluster is required as a cofactor. It depends on Mg(2+) as a cofactor.

It catalyses the reaction (2R)-2,3-dihydroxy-3-methylbutanoate = 3-methyl-2-oxobutanoate + H2O. The catalysed reaction is (2R,3R)-2,3-dihydroxy-3-methylpentanoate = (S)-3-methyl-2-oxopentanoate + H2O. The protein operates within amino-acid biosynthesis; L-isoleucine biosynthesis; L-isoleucine from 2-oxobutanoate: step 3/4. Its pathway is amino-acid biosynthesis; L-valine biosynthesis; L-valine from pyruvate: step 3/4. In terms of biological role, functions in the biosynthesis of branched-chain amino acids. Catalyzes the dehydration of (2R,3R)-2,3-dihydroxy-3-methylpentanoate (2,3-dihydroxy-3-methylvalerate) into 2-oxo-3-methylpentanoate (2-oxo-3-methylvalerate) and of (2R)-2,3-dihydroxy-3-methylbutanoate (2,3-dihydroxyisovalerate) into 2-oxo-3-methylbutanoate (2-oxoisovalerate), the penultimate precursor to L-isoleucine and L-valine, respectively. This chain is Dihydroxy-acid dehydratase, found in Campylobacter hominis (strain ATCC BAA-381 / DSM 21671 / CCUG 45161 / LMG 19568 / NCTC 13146 / CH001A).